The sequence spans 385 residues: Protein pelota homolog (385 aa).

Lys-162 participates in a covalent cross-link: Glycyl lysine isopeptide (Lys-Gly) (interchain with G-Cter in SUMO2). Residues Ser-374, Ser-380, Ser-381, and Ser-382 each carry the phosphoserine modification.

It belongs to the eukaryotic release factor 1 family. Pelota subfamily. Component of the Pelota-HBS1L complex, also named Dom34-Hbs1 complex, composed of PELO and HBS1L. Interacts with PINK1. Interacts with ABCE1. Interacts with CNOT4. A divalent metal cation is required as a cofactor. Ubiquitously expressed.

The protein resides in the cytoplasm. Functionally, component of the Pelota-HBS1L complex, a complex that recognizes stalled ribosomes and triggers the No-Go Decay (NGD) pathway. In the Pelota-HBS1L complex, PELO recognizes ribosomes stalled at the 3' end of an mRNA and engages stalled ribosomes by destabilizing mRNA in the mRNA channel. Following mRNA extraction from stalled ribosomes by the SKI complex, the Pelota-HBS1L complex promotes recruitment of ABCE1, which drives the disassembly of stalled ribosomes, followed by degradation of damaged mRNAs as part of the NGD pathway. As part of the PINK1-regulated signaling, upon mitochondrial damage is recruited to the ribosome/mRNA-ribonucleoprotein complex associated to mitochondrial outer membrane thereby enabling the recruitment of autophagy receptors and induction of mitophagy. The chain is Protein pelota homolog from Homo sapiens (Human).